A 545-amino-acid chain; its full sequence is CTP synthase (545 aa).

The segment at 1 to 266 (MKTNYIFVTG…DDYICKRFSL (266 aa)) is amidoligase domain. Ser14 contributes to the CTP binding site. Ser14 provides a ligand contact to UTP. ATP contacts are provided by residues 15-20 (SLGKGI) and Asp72. 2 residues coordinate Mg(2+): Asp72 and Glu140. CTP is bound by residues 147–149 (DIE), 187–192 (KTKPTQ), and Lys223. UTP contacts are provided by residues 187 to 192 (KTKPTQ) and Lys223. An ATP-binding site is contributed by 239-241 (KDV). The Glutamine amidotransferase type-1 domain maps to 291 to 542 (TIGMVGKYVE…VKAAFDYQKG (252 aa)). Residue Gly352 participates in L-glutamine binding. Cys379 functions as the Nucleophile; for glutamine hydrolysis in the catalytic mechanism. Residues 380 to 383 (LGMQ), Glu403, and Arg470 each bind L-glutamine. Active-site residues include His515 and Glu517.

This sequence belongs to the CTP synthase family. Homotetramer.

It carries out the reaction UTP + L-glutamine + ATP + H2O = CTP + L-glutamate + ADP + phosphate + 2 H(+). The catalysed reaction is L-glutamine + H2O = L-glutamate + NH4(+). The enzyme catalyses UTP + NH4(+) + ATP = CTP + ADP + phosphate + 2 H(+). The protein operates within pyrimidine metabolism; CTP biosynthesis via de novo pathway; CTP from UDP: step 2/2. Allosterically activated by GTP, when glutamine is the substrate; GTP has no effect on the reaction when ammonia is the substrate. The allosteric effector GTP functions by stabilizing the protein conformation that binds the tetrahedral intermediate(s) formed during glutamine hydrolysis. Inhibited by the product CTP, via allosteric rather than competitive inhibition. In terms of biological role, catalyzes the ATP-dependent amination of UTP to CTP with either L-glutamine or ammonia as the source of nitrogen. Regulates intracellular CTP levels through interactions with the four ribonucleotide triphosphates. The polypeptide is CTP synthase (Proteus mirabilis (strain HI4320)).